The primary structure comprises 167 residues: G/U mismatch-specific DNA glycosylase (167 aa).

This sequence belongs to the uracil-DNA glycosylase (UDG) superfamily. TDG/mug family. In terms of assembly, binds DNA as a monomer.

The protein localises to the cytoplasm. The enzyme catalyses Specifically hydrolyzes mismatched double-stranded DNA and polynucleotides, releasing free uracil.. Its function is as follows. Excises ethenocytosine and uracil, which can arise by alkylation or deamination of cytosine, respectively, from the corresponding mispairs with guanine in ds-DNA. It is capable of hydrolyzing the carbon-nitrogen bond between the sugar-phosphate backbone of the DNA and the mispaired base. The complementary strand guanine functions in substrate recognition. Required for DNA damage lesion repair in stationary-phase cells. This is G/U mismatch-specific DNA glycosylase from Pectobacterium carotovorum subsp. carotovorum (strain PC1).